The following is a 362-amino-acid chain: Probable choline-phosphate cytidylyltransferase (362 aa).

The segment covering 1 to 37 (MGEEGIKINDTHKRRIDEVEPSEKEDNVERQTKKYNF) has biased composition (basic and acidic residues). The interval 1 to 79 (MGEEGIKIND…VSPVEEEPRD (79 aa)) is disordered. Residues 109 to 117 (VFDLFHIGH) and Lys147 each bind CTP. Substrate contacts are provided by Lys147 and Trp176. CTP-binding positions include 193 to 194 (HD), Tyr198, and 221 to 225 (RTEGV). The tract at residues 308 to 362 (KNPLHGSSEPSSPGPTGFLGGINRWMQRRSSSHYDLPRVGNEIAASSSSATEENH) is disordered. Composition is skewed to low complexity over residues 313–323 (GSSEPSSPGPT) and 351–362 (AASSSSATEENH). 2 positions are modified to phosphoserine: Ser315 and Ser319. Residue Thr323 is modified to Phosphothreonine. Position 355 is a phosphoserine (Ser355).

This sequence belongs to the cytidylyltransferase family.

Its subcellular location is the nucleus. It catalyses the reaction phosphocholine + CTP + H(+) = CDP-choline + diphosphate. This chain is Probable choline-phosphate cytidylyltransferase, found in Schizosaccharomyces pombe (strain 972 / ATCC 24843) (Fission yeast).